The primary structure comprises 291 residues: UPF0276 protein VV3194 (291 aa).

This sequence belongs to the UPF0276 family.

The polypeptide is UPF0276 protein VV3194 (Vibrio vulnificus (strain YJ016)).